The primary structure comprises 467 residues: Uronate isomerase (467 aa).

It belongs to the metallo-dependent hydrolases superfamily. Uronate isomerase family.

The enzyme catalyses D-glucuronate = D-fructuronate. The catalysed reaction is aldehydo-D-galacturonate = keto-D-tagaturonate. Its pathway is carbohydrate metabolism; pentose and glucuronate interconversion. The sequence is that of Uronate isomerase from Haemophilus influenzae (strain PittGG).